We begin with the raw amino-acid sequence, 383 residues long: F-box/kelch-repeat protein At4g19330 (383 aa).

A disordered region spans residues 1–27 (MAYLSFKSNMERTPRESNTPCPPPQPS). In terms of domain architecture, F-box spans 28-79 (PSLFSSLPDDIVLNILARISTSYYQTLSLVSKTFRLLILSKELDMERSYLGT). Kelch repeat units follow at residues 147-192 (ETYE…VLDG), 193-239 (KLYV…NIQT), and 272-318 (STCE…SEIG).

Functionally, involved in seed germination. The polypeptide is F-box/kelch-repeat protein At4g19330 (Arabidopsis thaliana (Mouse-ear cress)).